Reading from the N-terminus, the 234-residue chain is Thymidine kinase, cytosolic (234 aa).

N-acetylserine is present on Ser-2. A phosphoserine mark is found at Ser-2 and Ser-13. Residues 26–33, 58–60, and 97–100 contribute to the ATP site; these read GPMFSGKS, DTR, and DEGQ. The Proton acceptor role is filled by Glu-98. Phe-128 lines the substrate pocket. Positions 153 and 156 each coordinate Zn(2+). Substrate contacts are provided by residues 172–176 and Tyr-181; that span reads VEVIG. Zn(2+) is bound by residues Cys-185 and Cys-188. The short motif at 203-205 is the KEN box element; the sequence is KEN. Ser-231 bears the Phosphoserine mark.

Belongs to the thymidine kinase family. As to quaternary structure, homotetramer. Tetramerization from dimerization is induced by ATP and increases catalytic efficiency due to a high affinity for thymidine. Tetramerization is inhibited by phosphorylation at Ser-13. Interacts (via the KEN box) with FZR1. Phosphorylated on Ser-13 in mitosis. Phosphorylation of Ser-13 by CDK1 during mitosis reduces homotetramerization and catalytic efficiency when DNA replication is complete and intracellular TK1 is still present at a high level. In terms of processing, polyubiquitinated. Postmitosis, ubiquitination leads to proteasomal degradation. The KEN box sequence located at the C-terminal region targets for degradation by the anaphase promoting complex (APC/C) activated and rate-limited by FZR1.

It localises to the cytoplasm. It carries out the reaction thymidine + ATP = dTMP + ADP + H(+). Cell-cycle-regulated enzyme of importance in nucleotide metabolism. Catalyzes the first enzymatic step in the salvage pathway converting thymidine into thymidine monophosphate. Transcriptional regulation limits expression to the S phase of the cell cycle and transient expression coincides with the oscillation in the intracellular dTTP concentration. Also important for the activation of anticancer and antiviral nucleoside analog prodrugs such as 1-b-d-arabinofuranosylcytosine (AraC) and 3c-azido-3c-deoxythymidine (AZT). The chain is Thymidine kinase, cytosolic from Homo sapiens (Human).